Consider the following 310-residue polypeptide: Low affinity immunoglobulin gamma Fc region receptor II-b (310 aa).

A signal peptide spans Met1–Gly42. The Extracellular segment spans residues Thr43–Pro217. Ig-like C2-type domains follow at residues Pro48 to Thr127 and Glu131 to Thr213. Intrachain disulfides connect Cys71/Cys113 and Cys152/Cys196. N-linked (GlcNAc...) asparagine glycans are attached at residues Asn106, Asn180, and Asn187. A helical transmembrane segment spans residues Ser218–Ala240. Topologically, residues Val241 to Ile310 are cytoplasmic. An ITIM motif motif is present at residues Ile290–Leu295. Tyr292 carries the phosphotyrosine; by SRC-type Tyr-kinases modification.

Interacts with INPP5D/SHIP1. Interacts with FGR. Interacts with LYN. As to quaternary structure, (Microbial infection) Isoform IIB1 interacts with measles virus protein N. Protein N is released in the blood following lysis of measles infected cells. This interaction presumably block inflammatory immune response. In terms of processing, phosphorylated by the SRC-type Tyr-kinases LYN and BLK. As to expression, is the most broadly distributed Fc-gamma-receptor. Expressed in monocyte, neutrophils, macrophages, basophils, eosinophils, Langerhans cells, B-cells, platelets cells and placenta (endothelial cells). Not detected in natural killer cells.

The protein resides in the cell membrane. Its function is as follows. Receptor for the Fc region of complexed or aggregated immunoglobulins gamma. Low affinity receptor. Involved in a variety of effector and regulatory functions such as phagocytosis of immune complexes and modulation of antibody production by B-cells. Binding to this receptor results in down-modulation of previous state of cell activation triggered via antigen receptors on B-cells (BCR), T-cells (TCR) or via another Fc receptor. Isoform IIB1 fails to mediate endocytosis or phagocytosis. Isoform IIB2 does not trigger phagocytosis. The sequence is that of Low affinity immunoglobulin gamma Fc region receptor II-b (FCGR2B) from Homo sapiens (Human).